A 95-amino-acid chain; its full sequence is Protein TusB (95 aa).

Belongs to the DsrH/TusB family. In terms of assembly, heterohexamer, formed by a dimer of trimers. The hexameric TusBCD complex contains 2 copies each of TusB, TusC and TusD. The TusBCD complex interacts with TusE.

The protein resides in the cytoplasm. In terms of biological role, part of a sulfur-relay system required for 2-thiolation of 5-methylaminomethyl-2-thiouridine (mnm(5)s(2)U) at tRNA wobble positions. The sequence is that of Protein TusB from Escherichia coli O139:H28 (strain E24377A / ETEC).